Here is a 178-residue protein sequence, read N- to C-terminus: Dual-action ribosomal maturation protein DarP (178 aa).

This sequence belongs to the DarP family.

The protein localises to the cytoplasm. Its function is as follows. Member of a network of 50S ribosomal subunit biogenesis factors which assembles along the 30S-50S interface, preventing incorrect 23S rRNA structures from forming. Promotes peptidyl transferase center (PTC) maturation. The sequence is that of Dual-action ribosomal maturation protein DarP from Mannheimia succiniciproducens (strain KCTC 0769BP / MBEL55E).